A 144-amino-acid chain; its full sequence is Bombinins BLP-7/GH-2 (144 aa).

A signal peptide spans 1 to 18 (MNFKYIVAVSFLIASTYA). The propeptide occupies 19–43 (RSVKNDEQSLSQRDVLEEESLREIR). Residue Asn-70 is modified to Asparagine amide. A propeptide spanning residues 74–123 (TAEEHEVMKRLEAVMRDLDSLDYPEEASEMETRSFNQEEIANLFTKKEKR) is cleaved from the precursor. Ile-143 bears the Isoleucine amide mark.

Belongs to the bombinin family. As to expression, expressed by the skin glands.

The protein resides in the secreted. In terms of biological role, antimicrobial peptide with activity against Gram-positive and -negative bacteria and fungi. Shows activity against P.acnes (MIC=5 uM), E.coli (MIC=5-6.3 uM), S.aureus (MIC=5-6.3 uM), M.luteus, S.cerevisiae and C.albicans (MIC=10-12.5 uM). Also reduces the production of interleukin (IL)-8 and granulocyte-macrophage colony stimulating factor (CSF2) in normal human epidermal keratinocytes (NHEKs). Shows anticancer activity against three human hepatoma cell lines. In vivo, using the rat ear edema model, suppress P.acnes-induced skin inflammation, significantly reducing the ear thickness. Shows weak hemolytic activity against human erythrocytes. Its function is as follows. Shows weak antimicrobial activity but high hemolytic activity. The chain is Bombinins BLP-7/GH-2 from Bombina orientalis (Oriental fire-bellied toad).